Here is a 149-residue protein sequence, read N- to C-terminus: Protegrin-5 (149 aa).

The N-terminal stretch at 1–29 is a signal peptide; sequence METQRASLCLGRWSLWLLLLGLVVPSASA. The propeptide occupies 30–130; that stretch reads QALSYREAVL…DITCNEVQGV (101 aa). The disordered stretch occupies residues 61–80; the sequence is DQPPKADEDPGTPKPVSFTV. Intrachain disulfides connect Cys85–Cys96, Cys107–Cys124, Cys136–Cys145, and Cys138–Cys143. Arg148 carries the arginine amide modification.

Belongs to the cathelicidin family.

The protein localises to the secreted. Microbicidal activity. The sequence is that of Protegrin-5 (NPG5) from Sus scrofa (Pig).